A 215-amino-acid chain; its full sequence is CASP-like protein 1E1 (215 aa).

At 1-51 (MESSRGKPGLNGSGGGAAAFDYSSRRGYYTGAGAALPPLAAGSRAPPVDPC) the chain is on the cytoplasmic side. Residues 52–72 (CVVLRVFVLLGTLASAVVMAA) form a helical membrane-spanning segment. At 73–103 (DRQSTTVQIAAGEELAPPLRVPVTAKWTYSS) the chain is on the extracellular side. Residues 104–124 (AFVYFVVANAMVFAFSAAALA) traverse the membrane as a helical segment. The Cytoplasmic segment spans residues 125–130 (AVRRRS). The chain crosses the membrane as a helical span at residues 131 to 151 (AVVPVMVGDLVAMALLFSAVG). Over 152–185 (AAAQFGLLGERGNAHVRWAKVCDVYGPFCERAMA) the chain is Extracellular. A helical membrane pass occupies residues 186–206 (AVVVALIAAFADLVLLMLTIL). Topologically, residues 207-215 (TIHKASSYY) are cytoplasmic.

It belongs to the Casparian strip membrane proteins (CASP) family. In terms of assembly, homodimer and heterodimers.

Its subcellular location is the cell membrane. This chain is CASP-like protein 1E1, found in Oryza sativa subsp. japonica (Rice).